The primary structure comprises 519 residues: Cyclic AMP-responsive element-binding protein 3-like protein 1 (519 aa).

Residues 1-60 (MDAVLEPFPADRLFPGSSFLDLGDLNESDFLNNAHFPEHLDHFTENMEDFSNDLFSSFFD) are required for transcriptional activation. Residues 1–374 (MDAVLEPFPA…YKMAATQTGT (374 aa)) are Cytoplasmic-facing. The interval 71–98 (LDMELDSPTPGIQAEHSYSLSGDSAPQS) is disordered. The span at 86 to 97 (HSYSLSGDSAPQ) shows a compositional bias: polar residues. Residue lysine 184 forms a Glycyl lysine isopeptide (Lys-Gly) (interchain with G-Cter in SUMO2) linkage. The disordered stretch occupies residues 200–259 (DLVQMPPTPPSSHGSDSDGSQSPRSLPPSSPVRPMARSSTAISTSPLLTAPHKLQGTSGP). Positions 210–223 (SSHGSDSDGSQSPR) are enriched in low complexity. Residues 236–246 (RSSTAISTSPL) are compositionally biased toward polar residues. One can recognise a bZIP domain in the interval 290 to 353 (ALKRVRRKIK…RTLLQQLQKL (64 aa)). Residues 292-321 (KRVRRKIKNKISAQESRRKKKEYVECLEKK) are basic motif. Residues 332 to 353 (LWKKVETLENANRTLLQQLQKL) form a leucine-zipper region. The chain crosses the membrane as a helical; Signal-anchor for type II membrane protein span at residues 375-395 (CLMVAALCFVLVLGSLVPCLP). The MBTPS2 recognition signature appears at 392–395 (PCLP). The Lumenal segment spans residues 396–519 (EFSSGSQTVK…LGPNTTIKLS (124 aa)). Positions 423-426 (RSLL) match the MBTPS1 recognition motif. Residues 484–519 (EAWPKDGGNGTSPDFSHSKEWFHDRDLGPNTTIKLS) form a disordered region. Asparagine 492 carries an N-linked (GlcNAc...) asparagine glycan. The span at 499–510 (SHSKEWFHDRDL) shows a compositional bias: basic and acidic residues. The N-linked (GlcNAc...) asparagine glycan is linked to asparagine 513.

Belongs to the bZIP family. ATF subfamily. As to quaternary structure, interacts with SMAD4, the interaction takes place upon TGFB1 induction and SMAD4 acts as a CREB3L1 coactivator to induce the expression of genes involved in assembly of collagen extracellular matrix. Post-translationally, upon ER stress or DNA damage, translocated to the Golgi apparatus, where it is processed by regulated intramembrane proteolysis (RIP) to release the cytosol-facing N-terminal transcription factor domain. The cleavage is performed sequentially by site-1 and site-2 proteases (S1P/MBTPS1 and S2P/MBTPS2). RIP is induced by TGFB1 and ceramide. In terms of processing, N-glycosylated. Ubiquitinated by HRD1/SYVN1; undergoes 'Lys-48'-linked ubiquitination, followed by rapid proteasomal degradation under normal conditions. Upon ER stress, SYVN1 E3 ubiquitin-protein ligase dissociates from its substrate, ubiquitination does not occur and CREB3L1 is stabilized. Expressed in several tissues, with highest levels in pancreas and prostate. Expressed at relatively lower levels in brain.

The protein localises to the endoplasmic reticulum membrane. Its subcellular location is the nucleus. Its function is as follows. Precursor of the transcription factor form (Processed cyclic AMP-responsive element-binding protein 3-like protein 1), which is embedded in the endoplasmic reticulum membrane with N-terminal DNA-binding and transcription activation domains oriented toward the cytosolic face of the membrane. In response to ER stress or DNA damage, transported to the Golgi, where it is cleaved in a site-specific manner by resident proteases S1P/MBTPS1 and S2P/MBTPS2. The released N-terminal cytosolic domain is translocated to the nucleus where it activates transcription of specific target genes involved in the cell-cycle progression inhibition. Transcription factor involved in cell type specific DNA damage and unfolded protein response (UPR). Binds the DNA consensus sequence 5'-GTGXGCXGC-3'. Plays a critical role in bone formation through the transcription of COL1A1, and possibly COL1A2, and the secretion of bone matrix proteins. Directly binds to the UPR element (UPRE)-like sequence in an osteoblast-specific COL1A1 promoter region and induces its transcription. Does not regulate COL1A1 in other tissues, such as skin. Required to protect astrocytes from ER stress-induced cell death. In astrocytes, binds to the cAMP response element (CRE) of the BiP/HSPA5 promoter and participate in its transcriptional activation. In astrocytes and osteoblasts, upon DNA damage, inhibits cell-cycle progression after G2/M phase by binding to promoters and activating transcription of genes encoding cell-cycle inhibitors, such as p21/CDKN1A. Required for TGFB1 to activate genes involved in the assembly of collagen extracellular matrix. Functionally, (Microbial infection) May play a role in limiting virus spread by inhibiting proliferation of virus-infected cells. Upon infection with diverse DNA and RNA viruses, inhibits cell-cycle progression by binding to promoters and activating transcription of genes encoding cell-cycle inhibitors, such as p21/CDKN1A. In Homo sapiens (Human), this protein is Cyclic AMP-responsive element-binding protein 3-like protein 1.